We begin with the raw amino-acid sequence, 151 residues long: MSHLNIANLGEDFVAQWLQSTGWMILNRQFSCRWGEIDIIAQHTRNNQESILAFVEVKTRSPGNWDDGGRGAITLKKQAKIERTARIFLAKYPDKAEYICRFDVAIVSYQIISKQDHELSITQESVTSSSVGEYKFQLQEYIPAAFECLID.

Belongs to the UPF0102 family.

The chain is UPF0102 protein Ava_4800 from Trichormus variabilis (strain ATCC 29413 / PCC 7937) (Anabaena variabilis).